A 383-amino-acid chain; its full sequence is Putative glutamate--cysteine ligase 2 (383 aa).

It belongs to the glutamate--cysteine ligase type 2 family. YbdK subfamily.

It carries out the reaction L-cysteine + L-glutamate + ATP = gamma-L-glutamyl-L-cysteine + ADP + phosphate + H(+). Functionally, ATP-dependent carboxylate-amine ligase which exhibits weak glutamate--cysteine ligase activity. This Legionella pneumophila subsp. pneumophila (strain Philadelphia 1 / ATCC 33152 / DSM 7513) protein is Putative glutamate--cysteine ligase 2.